Reading from the N-terminus, the 90-residue chain is Cell division topological specificity factor (90 aa).

The protein belongs to the MinE family.

Its function is as follows. Prevents the cell division inhibition by proteins MinC and MinD at internal division sites while permitting inhibition at polar sites. This ensures cell division at the proper site by restricting the formation of a division septum at the midpoint of the long axis of the cell. The chain is Cell division topological specificity factor from Francisella philomiragia subsp. philomiragia (strain ATCC 25017 / CCUG 19701 / FSC 153 / O#319-036).